Reading from the N-terminus, the 99-residue chain is DNA-directed RNA polymerase subunit omega (99 aa).

This sequence belongs to the RNA polymerase subunit omega family. The RNAP catalytic core consists of 2 alpha, 1 beta, 1 beta' and 1 omega subunit. When a sigma factor is associated with the core the holoenzyme is formed, which can initiate transcription.

The enzyme catalyses RNA(n) + a ribonucleoside 5'-triphosphate = RNA(n+1) + diphosphate. Functionally, promotes RNA polymerase assembly. Latches the N- and C-terminal regions of the beta' subunit thereby facilitating its interaction with the beta and alpha subunits. The chain is DNA-directed RNA polymerase subunit omega from Deinococcus deserti (strain DSM 17065 / CIP 109153 / LMG 22923 / VCD115).